A 185-amino-acid chain; its full sequence is Elongation factor P (185 aa).

It belongs to the elongation factor P family.

Its subcellular location is the cytoplasm. It participates in protein biosynthesis; polypeptide chain elongation. In terms of biological role, involved in peptide bond synthesis. Stimulates efficient translation and peptide-bond synthesis on native or reconstituted 70S ribosomes in vitro. Probably functions indirectly by altering the affinity of the ribosome for aminoacyl-tRNA, thus increasing their reactivity as acceptors for peptidyl transferase. The sequence is that of Elongation factor P from Thermosipho africanus (strain TCF52B).